A 614-amino-acid chain; its full sequence is Phragmoplastin DRP1C (614 aa).

The 270-residue stretch at 32-301 (WEALPTVAVV…LETVIRQKIP (270 aa)) folds into the Dynamin-type G domain. The G1 motif stretch occupies residues 42–49 (GGQSSGKS). Residue 45 to 50 (SSGKSS) participates in GTP binding. A G2 motif region spans residues 68-70 (VTR). Positions 143–146 (DLPG) are G3 motif. The G4 motif stretch occupies residues 212-215 (TKLD). GTP-binding positions include 213 to 218 (KLDIMD) and 243 to 246 (NRSQ). A G5 motif region spans residues 242-245 (VNRS). A disordered region spans residues 499-519 (EPEKEKPNPRNAPAPNADPYS). Low complexity predominate over residues 507 to 517 (PRNAPAPNADP). A GED domain is found at 523–614 (FRKIGSNVSA…RDDIDAVAWK (92 aa)).

Belongs to the TRAFAC class dynamin-like GTPase superfamily. Dynamin/Fzo/YdjA family. Forms homodimer and may homooligomerize and heterooligomerize to form the phragmoplastin complex. Binds to PHIP1. In terms of tissue distribution, ubiquitous.

It localises to the cytoplasm. Its subcellular location is the cytoskeleton. It is found in the cell cortex. The protein localises to the cytoplasmic vesicle. The protein resides in the clathrin-coated vesicle. It localises to the phragmoplast. The enzyme catalyses GTP + H2O = GDP + phosphate + H(+). In terms of biological role, microtubule-associated force-producing protein that is targeted to the growing edges of the cell plate during cytokinesis. Also plays a major role in plasma membrane maintenance during pollen maturation. Has a GTPase activity. In Arabidopsis thaliana (Mouse-ear cress), this protein is Phragmoplastin DRP1C.